Reading from the N-terminus, the 287-residue chain is Ribosomal RNA small subunit methyltransferase I (287 aa).

This sequence belongs to the methyltransferase superfamily. RsmI family.

It localises to the cytoplasm. It catalyses the reaction cytidine(1402) in 16S rRNA + S-adenosyl-L-methionine = 2'-O-methylcytidine(1402) in 16S rRNA + S-adenosyl-L-homocysteine + H(+). Its function is as follows. Catalyzes the 2'-O-methylation of the ribose of cytidine 1402 (C1402) in 16S rRNA. The protein is Ribosomal RNA small subunit methyltransferase I of Streptococcus pyogenes serotype M3 (strain ATCC BAA-595 / MGAS315).